A 255-amino-acid chain; its full sequence is Ribosomal RNA small subunit methyltransferase J (255 aa).

S-adenosyl-L-methionine-binding positions include 107–108 (RD), 123–124 (ER), and aspartate 178. Residues 228-247 (ARAEPLSGRKPSHQIPGKTT) are disordered.

The protein belongs to the methyltransferase superfamily. RsmJ family.

The protein resides in the cytoplasm. The catalysed reaction is guanosine(1516) in 16S rRNA + S-adenosyl-L-methionine = N(2)-methylguanosine(1516) in 16S rRNA + S-adenosyl-L-homocysteine + H(+). In terms of biological role, specifically methylates the guanosine in position 1516 of 16S rRNA. In Thioalkalivibrio sulfidiphilus (strain HL-EbGR7), this protein is Ribosomal RNA small subunit methyltransferase J.